The following is a 614-amino-acid chain: Pyruvate decarboxylase 2 (614 aa).

Substrate is bound by residues D50 and H137. The segment at 415-523 (DSWFNCQKLK…FLINNGGYTI (109 aa)) is thiamine pyrophosphate binding. Mg(2+) is bound by residues D491, N518, and G520. E524 contributes to the substrate binding site.

It belongs to the TPP enzyme family. As to quaternary structure, homotetramer. Requires a metal cation as cofactor. The cofactor is thiamine diphosphate. As to expression, pollen.

It catalyses the reaction a 2-oxocarboxylate + H(+) = an aldehyde + CO2. This is Pyruvate decarboxylase 2 (PDC2) from Nicotiana tabacum (Common tobacco).